We begin with the raw amino-acid sequence, 532 residues long: Light-independent protochlorophyllide reductase subunit B (532 aa).

Asp-36 serves as a coordination point for [4Fe-4S] cluster. Asp-282 functions as the Proton donor in the catalytic mechanism. 417–418 (GL) is a binding site for substrate.

Belongs to the ChlB/BchB/BchZ family. Protochlorophyllide reductase is composed of three subunits; BchL, BchN and BchB. Forms a heterotetramer of two BchB and two BchN subunits. The cofactor is [4Fe-4S] cluster.

It catalyses the reaction chlorophyllide a + oxidized 2[4Fe-4S]-[ferredoxin] + 2 ADP + 2 phosphate = protochlorophyllide a + reduced 2[4Fe-4S]-[ferredoxin] + 2 ATP + 2 H2O. It functions in the pathway porphyrin-containing compound metabolism; bacteriochlorophyll biosynthesis (light-independent). Functionally, component of the dark-operative protochlorophyllide reductase (DPOR) that uses Mg-ATP and reduced ferredoxin to reduce ring D of protochlorophyllide (Pchlide) to form chlorophyllide a (Chlide). This reaction is light-independent. The NB-protein (BchN-BchB) is the catalytic component of the complex. The chain is Light-independent protochlorophyllide reductase subunit B from Methylobacterium radiotolerans (strain ATCC 27329 / DSM 1819 / JCM 2831 / NBRC 15690 / NCIMB 10815 / 0-1).